Reading from the N-terminus, the 201-residue chain is 3-isopropylmalate dehydratase small subunit (201 aa).

It belongs to the LeuD family. LeuD type 1 subfamily. Heterodimer of LeuC and LeuD.

It catalyses the reaction (2R,3S)-3-isopropylmalate = (2S)-2-isopropylmalate. It functions in the pathway amino-acid biosynthesis; L-leucine biosynthesis; L-leucine from 3-methyl-2-oxobutanoate: step 2/4. Its function is as follows. Catalyzes the isomerization between 2-isopropylmalate and 3-isopropylmalate, via the formation of 2-isopropylmaleate. This is 3-isopropylmalate dehydratase small subunit from Escherichia coli O45:K1 (strain S88 / ExPEC).